A 229-amino-acid polypeptide reads, in one-letter code: Uracil-DNA glycosylase (229 aa).

The active-site Proton acceptor is the aspartate 64.

The protein belongs to the uracil-DNA glycosylase (UDG) superfamily. UNG family.

The protein localises to the cytoplasm. The catalysed reaction is Hydrolyzes single-stranded DNA or mismatched double-stranded DNA and polynucleotides, releasing free uracil.. Functionally, excises uracil residues from the DNA which can arise as a result of misincorporation of dUMP residues by DNA polymerase or due to deamination of cytosine. This chain is Uracil-DNA glycosylase, found in Escherichia coli O81 (strain ED1a).